The sequence spans 292 residues: Ribosomal protein L11 methyltransferase (292 aa).

Residues Thr-144, Gly-165, Asp-187, and Asn-229 each coordinate S-adenosyl-L-methionine.

It belongs to the methyltransferase superfamily. PrmA family.

The protein resides in the cytoplasm. It carries out the reaction L-lysyl-[protein] + 3 S-adenosyl-L-methionine = N(6),N(6),N(6)-trimethyl-L-lysyl-[protein] + 3 S-adenosyl-L-homocysteine + 3 H(+). Its function is as follows. Methylates ribosomal protein L11. In Pseudomonas fluorescens (strain Pf0-1), this protein is Ribosomal protein L11 methyltransferase.